A 255-amino-acid chain; its full sequence is Electron transfer flavoprotein subunit beta (255 aa).

An N-acetylalanine modification is found at Ala-2. AMP-binding positions include Ala-9, 39–42 (NPFC), Cys-66, and 123–134 (GKQAIDDDCNQT). The segment at 183–205 (ADLRLNEPRYATLPNIMKAKKKK) is recognition loop. Lys-200 bears the N6,N6,N6-trimethyllysine; by ETFBKMT; alternate mark. N6-acetyllysine; alternate is present on Lys-200. An N6-methyllysine; alternate modification is found at Lys-200. Lys-203 is modified (N6,N6,N6-trimethyllysine; by ETFBKMT). Lys-210 is subject to N6-acetyllysine; alternate. The residue at position 210 (Lys-210) is an N6-succinyllysine; alternate. Residues Ser-223 and Ser-226 each carry the phosphoserine modification. An N6-acetyllysine modification is found at Lys-238. The residue at position 248 (Lys-248) is an N6-acetyllysine; alternate. Lys-248 is modified (N6-succinyllysine; alternate).

It belongs to the ETF beta-subunit/FixA family. As to quaternary structure, heterodimer composed of ETFA and ETFB. Identified in a complex that contains ETFA, ETFB and ETFRF1. Interacts with ACADM. Post-translationally, methylated. Trimethylation at Lys-200 and Lys-203 may negatively regulate the activity in electron transfer from acyl-CoA dehydrogenases.

It localises to the mitochondrion matrix. Its function is as follows. Heterodimeric electron transfer flavoprotein that accepts electrons from several mitochondrial dehydrogenases, including acyl-CoA dehydrogenases, glutaryl-CoA and sarcosine dehydrogenase. It transfers the electrons to the main mitochondrial respiratory chain via ETF-ubiquinone oxidoreductase. Required for normal mitochondrial fatty acid oxidation and normal amino acid metabolism. ETFB binds an AMP molecule that probably has a purely structural role. This is Electron transfer flavoprotein subunit beta from Bos taurus (Bovine).